The primary structure comprises 567 residues: Potassium-transporting ATPase potassium-binding subunit (567 aa).

11 helical membrane-spanning segments follow: residues 5 to 25 (GWIQ…PLGF), 64 to 84 (TAYA…LYAL), 136 to 156 (GLTV…IALI), 179 to 199 (LYVL…LGIP), 254 to 274 (ISNL…TNVF), 285 to 305 (WAIL…CYWA), 330 to 350 (FGIA…CGAV), 357 to 376 (FTAL…EVIV), 421 to 441 (MLAI…AVVL), 486 to 506 (ITIG…ALAI), and 529 to 549 (LFVG…FFPA).

Belongs to the KdpA family. In terms of assembly, the system is composed of three essential subunits: KdpA, KdpB and KdpC.

It is found in the cell inner membrane. Its function is as follows. Part of the high-affinity ATP-driven potassium transport (or Kdp) system, which catalyzes the hydrolysis of ATP coupled with the electrogenic transport of potassium into the cytoplasm. This subunit binds the periplasmic potassium ions and delivers the ions to the membrane domain of KdpB through an intramembrane tunnel. This chain is Potassium-transporting ATPase potassium-binding subunit, found in Mesorhizobium japonicum (strain LMG 29417 / CECT 9101 / MAFF 303099) (Mesorhizobium loti (strain MAFF 303099)).